Reading from the N-terminus, the 359-residue chain is DNA replication and repair protein RecF (359 aa).

Gly30 to Thr37 contributes to the ATP binding site.

The protein belongs to the RecF family.

The protein resides in the cytoplasm. In terms of biological role, the RecF protein is involved in DNA metabolism; it is required for DNA replication and normal SOS inducibility. RecF binds preferentially to single-stranded, linear DNA. It also seems to bind ATP. In Vibrio vulnificus (strain YJ016), this protein is DNA replication and repair protein RecF.